We begin with the raw amino-acid sequence, 651 residues long: 120 kDa Glycoprotein O (651 aa).

The N-terminal stretch at 1 to 56 (MHLEVIVQSYKKSKYYFSHTFYLYKFIVVNSPDMLHISRLGLFLGLFAIVMHSVNL) is a signal peptide. Asn74, Asn97, Asn147, Asn208, Asn223, Asn234, and Asn254 each carry an N-linked (GlcNAc...) asparagine; by host glycan. Low complexity predominate over residues 275–292 (SSTSASLTSPHIPSTNIP). Residues 275-303 (SSTSASLTSPHIPSTNIPTPAPPPVTKNS) form a disordered region. N-linked (GlcNAc...) asparagine; by host glycans are attached at residues Asn302, Asn355, Asn378, Asn395, Asn469, Asn502, Asn520, Asn546, Asn603, Asn620, and Asn631.

The protein belongs to the herpesviridae U47 family. As to quaternary structure, part of a gH-gL-gO complex. Post-translationally, a shorter mature protein, gO-80K, is produced probably by proteolytic cleavage. Modified with high mannose-oligosaccharides. In terms of processing, N-glycosylated with complex glycans.

The protein localises to the virion. Its subcellular location is the host cell membrane. In Human herpesvirus 6A (strain Uganda-1102) (HHV-6 variant A), this protein is 120 kDa Glycoprotein O (U47).